A 250-amino-acid chain; its full sequence is Hydroxyethylthiazole kinase (250 aa).

Residue Met39 participates in substrate binding. Residues Arg114 and Thr159 each coordinate ATP. Position 186 (Gly186) interacts with substrate.

This sequence belongs to the Thz kinase family. Requires Mg(2+) as cofactor.

It carries out the reaction 5-(2-hydroxyethyl)-4-methylthiazole + ATP = 4-methyl-5-(2-phosphooxyethyl)-thiazole + ADP + H(+). It functions in the pathway cofactor biosynthesis; thiamine diphosphate biosynthesis; 4-methyl-5-(2-phosphoethyl)-thiazole from 5-(2-hydroxyethyl)-4-methylthiazole: step 1/1. In terms of biological role, catalyzes the phosphorylation of the hydroxyl group of 4-methyl-5-beta-hydroxyethylthiazole (THZ). This Lactococcus lactis subsp. lactis (strain IL1403) (Streptococcus lactis) protein is Hydroxyethylthiazole kinase.